A 476-amino-acid polypeptide reads, in one-letter code: MTTVAQKHFLEGQTYSVPLIQPDLRREEAVQQVADALQYLQKVSGDIFNRISQRVETSRAQLQAISERVTLAQAKIEKIKGSKKAIKVFSSAKYPAPERLQEYCSIFAGAEDPSKQKWPRHKIQSKHRMLDEKSLQEKLKYFPVCVNTKIHQEDDAEEGLGSLPRNISSLSSLLLFNTTENLYKKYVFLDPLAGAVTKTHVALETETEEKLFDAPLSITERGQLDRQVAENYFYVPDLGQVPEIDVPSYLPDLPGIAADLMYSADLGPGIAPSAPSSAIPELPTFSTESVEPSQADLQDPGLLPPPPPPPPPPPPVMPTTVPPPPPLPQPTAPSEPARTASEDSSKTVPAASVQGAPKEVVNPSTGRASLLESIRQAGGIGKANLRSVKERKLEKKKQKEQEQVRATGQGGDLMSDLFNKLVLRRKGISGKGPGASANPDAPGSPAGAFARMSDSIPPLPPPQQPPGEEDEDDWES.

Positions 1-54 are required for WASH complex assembly; that stretch reads MTTVAQKHFLEGQTYSVPLIQPDLRREEAVQQVADALQYLQKVSGDIFNRISQR. 2 disordered regions span residues 273-412 and 427-476; these read SAPS…QGGD and GISG…DWES. Residues 284 to 296 show a composition bias toward polar residues; that stretch reads TFSTESVEPSQAD. Residues 302–333 show a composition bias toward pro residues; it reads LLPPPPPPPPPPPPVMPTTVPPPPPLPQPTAP. The VCA stretch occupies residues 354 to 476; the sequence is QGAPKEVVNP…GEEDEDDWES (123 aa). One can recognise a WH2 domain in the interval 366–388; that stretch reads GRASLLESIRQAGGIGKANLRSV. Basic and acidic residues predominate over residues 387-403; sequence SVKERKLEKKKQKEQEQ. Residues 467-476 show a composition bias toward acidic residues; it reads GEEDEDDWES.

It belongs to the WASH1 family. As to quaternary structure, component of the WASH complex.

It is found in the early endosome membrane. The protein resides in the recycling endosome membrane. Functionally, acts as a nucleation-promoting factor at the surface of endosomes, where it recruits and activates the Arp2/3 complex to induce actin polymerization, playing a key role in the fission of tubules that serve as transport intermediates during endosome sorting. This Gallus gallus (Chicken) protein is WASH complex subunit 1.